We begin with the raw amino-acid sequence, 123 residues long: Large ribosomal subunit protein bL20 (123 aa).

Positions 1 to 15 (MARVKRSVNAKKKRR) are enriched in basic residues. The interval 1–23 (MARVKRSVNAKKKRREVLDQASG) is disordered.

This sequence belongs to the bacterial ribosomal protein bL20 family.

Functionally, binds directly to 23S ribosomal RNA and is necessary for the in vitro assembly process of the 50S ribosomal subunit. It is not involved in the protein synthesizing functions of that subunit. This Cutibacterium acnes (strain DSM 16379 / KPA171202) (Propionibacterium acnes) protein is Large ribosomal subunit protein bL20.